A 361-amino-acid chain; its full sequence is sn-glycerol-3-phosphate import ATP-binding protein UgpC (361 aa).

The 232-residue stretch at 4-235 folds into the ABC transporter domain; sequence LSFRNLKKTY…PASTFVAGFI (232 aa). ATP is bound at residue 37–44; sequence GPSGCGKS.

Belongs to the ABC transporter superfamily. sn-glycerol-3-phosphate importer (TC 3.A.1.1.3) family. The complex is composed of two ATP-binding proteins (UgpC), two transmembrane proteins (UgpA and UgpE) and a solute-binding protein (UgpB).

Its subcellular location is the cell inner membrane. It carries out the reaction sn-glycerol 3-phosphate(out) + ATP + H2O = sn-glycerol 3-phosphate(in) + ADP + phosphate + H(+). Part of the ABC transporter complex UgpBAEC involved in sn-glycerol-3-phosphate (G3P) import. Responsible for energy coupling to the transport system. The polypeptide is sn-glycerol-3-phosphate import ATP-binding protein UgpC (Bordetella avium (strain 197N)).